The primary structure comprises 37 residues: MKVRASVKPICEKCRVIRRKGRVMVICENPKHKQRQG.

Belongs to the bacterial ribosomal protein bL36 family.

This chain is Large ribosomal subunit protein bL36, found in Gloeobacter violaceus (strain ATCC 29082 / PCC 7421).